The chain runs to 346 residues: Protein PXR1 (346 aa).

Disordered regions lie at residues 1-27 (MGLA…NTEN) and 146-315 (EDAE…QVSV). Positions 15–27 (DPNNTRWSRNTEN) are enriched in polar residues. A G-patch domain is found at 25–79 (TENFGHRMLRSQGWEPGQYLGPQDASHAVYHTAASASHIKVALKEDNLGLGAKMN). The span at 215 to 230 (SKSKKSHKSKKEKKRR) shows a compositional bias: basic residues. A compositionally biased stretch (acidic residues) spans 235–245 (ASDEQESEDEE). The span at 249-274 (KRRKKEKKERKERRREKREKKLKKKQ) shows a compositional bias: basic residues. The segment covering 293-314 (GVDTGASTPVASGTSTPVSQVS) has biased composition (polar residues).

This sequence belongs to the PINX1 family.

It localises to the nucleus. Its subcellular location is the nucleolus. In terms of biological role, involved in rRNA-processing at A0, A1 and A2 sites and negatively regulates telomerase. The polypeptide is Protein PXR1 (PXR1) (Pyricularia oryzae (strain 70-15 / ATCC MYA-4617 / FGSC 8958) (Rice blast fungus)).